The primary structure comprises 482 residues: MARALMIQGAGSDVGKSLIVAGLARAFTRRGLRVLPFKPQNMSNNAAVTVDGGEIGRAQALQALAAGVEPHTDMNPVLLKPETDVGAQVVVHGKRIATARAREYAAMKPSLMGAVLESFERLKARADLVLVEGAGSPAEVNLRKADIANMGFARKADVPVVLIGDIDRGGVIAQLVGIKTVIDPDDAAMIQGFVINKFRGDPTLFDDGYKLIEAKTAWRGFGVLPWFARAGELPAEDALGLSDARKPGQCKIACLALSRIANFDDLDPLKLEAAVDLVMVRPGEAIPGDVRLVIIPGSKSTRGDLAFLRAQGWDIDLLAHYRRGGHVLGLCGGYQMLGRSVADPDGIEGPAGDTPGLGLLDVQTVMSPQKTLTRVTAVHAATNQPIQAYEIHIGRTDGPDRARPFAKLNGEPEGAISSDGRVQGSYLHGLFTSDDFRKAFLTKLDIPAGDEPYHSRVESALDALADHIEKHLDVEGLLSLAR.

A GATase cobBQ-type domain is found at 249 to 436 (QCKIACLALS…LHGLFTSDDF (188 aa)). C331 serves as the catalytic Nucleophile. H428 is an active-site residue.

It belongs to the CobB/CobQ family. CobQ subfamily.

It functions in the pathway cofactor biosynthesis; adenosylcobalamin biosynthesis. Catalyzes amidations at positions B, D, E, and G on adenosylcobyrinic A,C-diamide. NH(2) groups are provided by glutamine, and one molecule of ATP is hydrogenolyzed for each amidation. The polypeptide is Cobyric acid synthase (Bradyrhizobium diazoefficiens (strain JCM 10833 / BCRC 13528 / IAM 13628 / NBRC 14792 / USDA 110)).